Reading from the N-terminus, the 376-residue chain is Putative endoglucanase type K (376 aa).

The first 18 residues, Met1–Ala18, serve as a signal peptide directing secretion. The segment at Ser19–Lys308 is catalytic. Catalysis depends on Asp29, which acts as the Nucleophile. The Proton donor role is filled by Asp140. The segment at Ala229–Ala332 is disordered. Composition is skewed to low complexity over residues Ser235 to Gln258 and Lys291 to Val306. Positions Pro309–Pro338 are linker. The 40-residue stretch at Ser335–Val374 folds into the CBM1 domain.

This sequence belongs to the glycosyl hydrolase 45 (cellulase K) family.

The catalysed reaction is Endohydrolysis of (1-&gt;4)-beta-D-glucosidic linkages in cellulose, lichenin and cereal beta-D-glucans.. The chain is Putative endoglucanase type K from Fusarium oxysporum (Fusarium vascular wilt).